The sequence spans 123 residues: Aberrant microtubules protein 1 (123 aa).

In terms of biological role, required for normal microtubule organization. The chain is Aberrant microtubules protein 1 (ABM1) from Saccharomyces cerevisiae (strain ATCC 204508 / S288c) (Baker's yeast).